We begin with the raw amino-acid sequence, 1479 residues long: Putative receptor-type tyrosine-protein phosphatase mosPTP-1 (1479 aa).

An N-terminal signal peptide occupies residues 1–28 (MKPRLLTTVTTWLALVLPVVYLSRPCQA). Topologically, residues 29-365 (LPTVNFTANY…RQSYNDYNLA (337 aa)) are extracellular. N33, N40, N146, N182, N248, N294, and N306 each carry an N-linked (GlcNAc...) asparagine glycan. Fibronectin type-III domains are found at residues 143 to 242 (KPLN…AGPS) and 243 to 346 (APKV…VQLN). Residues 366 to 386 (VMIGILICCFGLLFIVLTILL) form a helical membrane-spanning segment. The Cytoplasmic segment spans residues 387–1479 (WKKCFHAAYY…AKLRAVVRVE (1093 aa)). Tyrosine-protein phosphatase domains lie at 452-717 (FSKE…LVEA) and 740-992 (IDSQ…LSYM). Catalysis depends on C658, which acts as the Phosphocysteine intermediate.

The protein belongs to the protein-tyrosine phosphatase family. Receptor class subfamily. Interacts with C-type lectin mosGCTL-1. Interacts with C-type lectin mosGCTL-7.

It localises to the cell membrane. It catalyses the reaction O-phospho-L-tyrosyl-[protein] + H2O = L-tyrosyl-[protein] + phosphate. Its function is as follows. Putative protein tyrosine-protein phosphatase. (Microbial infection) Facilitates West Nile virus infection in mosquitoes. This Culex quinquefasciatus (Southern house mosquito) protein is Putative receptor-type tyrosine-protein phosphatase mosPTP-1.